Here is a 167-residue protein sequence, read N- to C-terminus: UPF0254 protein MJ1251 (167 aa).

The protein belongs to the UPF0254 family.

The protein is UPF0254 protein MJ1251 of Methanocaldococcus jannaschii (strain ATCC 43067 / DSM 2661 / JAL-1 / JCM 10045 / NBRC 100440) (Methanococcus jannaschii).